The sequence spans 145 residues: FAD synthase (145 aa).

ATP contacts are provided by residues 9 to 10 (TF), 14 to 17 (HPGH), D94, and Y122.

Belongs to the archaeal FAD synthase family. As to quaternary structure, homodimer. The cofactor is a divalent metal cation.

It carries out the reaction FMN + ATP + H(+) = FAD + diphosphate. The protein operates within cofactor biosynthesis; FAD biosynthesis; FAD from FMN: step 1/1. In terms of biological role, catalyzes the transfer of the AMP portion of ATP to flavin mononucleotide (FMN) to produce flavin adenine dinucleotide (FAD) coenzyme. This chain is FAD synthase, found in Methanocaldococcus infernus (strain DSM 11812 / JCM 15783 / ME).